The sequence spans 141 residues: Large ribosomal subunit protein uL6 (141 aa).

Belongs to the universal ribosomal protein uL6 family.

In Haemonchus contortus (Barber pole worm), this protein is Large ribosomal subunit protein uL6.